We begin with the raw amino-acid sequence, 314 residues long: Bifunctional pinoresinol-lariciresinol reductase (314 aa).

Residues 10-16, R35, and K44 contribute to the NADP(+) site; that span reads GGTGYIG. The active-site Proton acceptor is the K138. R142 contributes to the NADP(+) binding site. H270 contributes to the substrate binding site.

This sequence belongs to the NmrA-type oxidoreductase family. Isoflavone reductase subfamily. As to quaternary structure, dimer.

The enzyme catalyses (+)-lariciresinol + NADP(+) = (+)-pinoresinol + NADPH + H(+). It carries out the reaction (+)-secoisolariciresinol + NADP(+) = (-)-lariciresinol + NADPH + H(+). Its function is as follows. Reductase involved in the lignan justicidin B biosynthesis. Catalyzes the enantioselective conversion of (+)-pinoresinol into (+)-lariciresinol and of (-)-lariciresinol into (+)-secoisolariciresinol. Low activity with the other enantiomers. Abstracts the 4R-hydride from the NADPH cofactor during catalysis. This is Bifunctional pinoresinol-lariciresinol reductase (PLR_Lp1) from Linum perenne (Perennial flax).